The primary structure comprises 528 residues: DEAD-box ATP-dependent RNA helicase 6 (528 aa).

2 stretches are compositionally biased toward low complexity: residues 1-15 (MNNN…PPGI) and 65-80 (QQYV…QQQQ). The segment at 1–80 (MNNNNNNRGR…GYPQQIQQQQ (80 aa)) is disordered. A Q motif motif is present at residues 154-182 (NEFEDYFLKRDLLRGIYEKGFEKPSPIQE). A Helicase ATP-binding domain is found at 185–355 (IPIALTGSDI…DRYLKKPYII (171 aa)). ATP is bound at residue 198–205 (AKNGTGKT). Thr260 carries the post-translational modification Phosphothreonine. The DEAD box motif lies at 303-306 (DEAD). In terms of domain architecture, Helicase C-terminal spans 365–525 (GVTQYYAFVE…PIPSLIDKAI (161 aa)).

This sequence belongs to the DEAD box helicase family. DDX6/DHH1 subfamily.

The protein localises to the cytoplasm. The protein resides in the P-body. It carries out the reaction ATP + H2O = ADP + phosphate + H(+). Functionally, ATP-dependent RNA helicase involved in mRNA turnover, and more specifically in mRNA decapping. This chain is DEAD-box ATP-dependent RNA helicase 6 (RH6), found in Arabidopsis thaliana (Mouse-ear cress).